Reading from the N-terminus, the 54-residue chain is Ribulose bisphosphate carboxylase large chain (54 aa).

A propeptide spanning residues 1-2 is cleaved from the precursor; sequence MS. Pro-3 bears the N-acetylproline mark. Lys-14 carries the post-translational modification N6,N6,N6-trimethyllysine.

It belongs to the RuBisCO large chain family. Type I subfamily. Heterohexadecamer of 8 large chains and 8 small chains.

The protein localises to the plastid. Its subcellular location is the chloroplast. It carries out the reaction 2 (2R)-3-phosphoglycerate + 2 H(+) = D-ribulose 1,5-bisphosphate + CO2 + H2O. The enzyme catalyses D-ribulose 1,5-bisphosphate + O2 = 2-phosphoglycolate + (2R)-3-phosphoglycerate + 2 H(+). Its function is as follows. RuBisCO catalyzes two reactions: the carboxylation of D-ribulose 1,5-bisphosphate, the primary event in carbon dioxide fixation, as well as the oxidative fragmentation of the pentose substrate in the photorespiration process. Both reactions occur simultaneously and in competition at the same active site. The chain is Ribulose bisphosphate carboxylase large chain (rbcL) from Icacina mannii.